The chain runs to 217 residues: Somatotropin (217 aa).

An N-terminal signal peptide occupies residues 1-27 (MMAAGPRTSLLLAFTLLCLPWTQVVGA). Residue His-46 participates in Zn(2+) binding. Cys-79 and Cys-190 are joined by a disulfide. Ser-132 is modified (phosphoserine). A Zn(2+)-binding site is contributed by Glu-199. Cys-207 and Cys-215 are joined by a disulfide.

The protein belongs to the somatotropin/prolactin family.

It localises to the secreted. Plays an important role in growth control. Its major role in stimulating body growth is to stimulate the liver and other tissues to secrete IGF1. It stimulates both the differentiation and proliferation of myoblasts. It also stimulates amino acid uptake and protein synthesis in muscle and other tissues. This Capra hircus (Goat) protein is Somatotropin (GH1).